A 133-amino-acid chain; its full sequence is Profilin (133 aa).

It belongs to the profilin family.

In terms of biological role, more likely to influence phosphoinositide metabolism than actin assembly. The chain is Profilin from Camelus.